A 59-amino-acid polypeptide reads, in one-letter code: Large ribosomal subunit protein uL30 (59 aa).

It belongs to the universal ribosomal protein uL30 family. As to quaternary structure, part of the 50S ribosomal subunit.

The sequence is that of Large ribosomal subunit protein uL30 from Acetivibrio thermocellus (strain ATCC 27405 / DSM 1237 / JCM 9322 / NBRC 103400 / NCIMB 10682 / NRRL B-4536 / VPI 7372) (Clostridium thermocellum).